Here is a 235-residue protein sequence, read N- to C-terminus: C-type lectin domain family 2 member D-related protein (235 aa).

The segment at 1–50 is disordered; the sequence is MPSSAHLQDPPPHLSRTLTQDEEQTSLRQSSSCGPSTTSASASESLSGST. Residues 1–75 lie on the Cytoplasmic side of the membrane; it reads MPSSAHLQDP…KIIPTESAAK (75 aa). A compositionally biased stretch (low complexity) spans 30 to 50; it reads SSSCGPSTTSASASESLSGST. A helical; Signal-anchor for type II membrane protein transmembrane segment spans residues 76–96; it reads LLCCYAVFMALTVVVIALSIA. The Extracellular portion of the chain corresponds to 97–235; it reads LSVKKTPQIS…KLNSYTSQCP (139 aa). A C-type lectin domain is found at 121-232; that stretch reads FGNKCYYFNE…ICSKLNSYTS (112 aa). The N-linked (GlcNAc...) asparagine glycan is linked to asparagine 134.

Its subcellular location is the cell membrane. In terms of biological role, lectin-type cell surface receptor. This Rattus norvegicus (Rat) protein is C-type lectin domain family 2 member D-related protein.